The chain runs to 1138 residues: Protein RECOGNITION OF PERONOSPORA PARASITICA 7 (1138 aa).

The NB-ARC domain maps to 166–422; sequence EENVKKLVGY…CNYVLSLSFE (257 aa). Residue 189 to 196 coordinates ATP; it reads GMGGLGKT. 19 LRR repeats span residues 544 to 565, 566 to 581, 582 to 606, 607 to 631, 655 to 680, 681 to 705, 707 to 726, 727 to 752, 754 to 774, 775 to 797, 798 to 825, 847 to 871, 873 to 893, 894 to 918, 940 to 963, 1028 to 1050, 1055 to 1078, 1079 to 1103, and 1115 to 1138; these read QYPTTLHVEKDINNPKLRSLVV, VTLGSWNMAGSSFTRL, ELLRVLDLVQAKLKGGKLASCIGKL, IHLRYLSLEYAEVTHIPYSLGNLKL, MQELRYLALPSLIERKTKLELSNLVK, LETLENFSTKNSSLEDLRGMVRLRT, TIELIEETSLETLAASIGGL, KYLEKLEIDDLGSKMRTKEAGIVFDF, HLKRLRLELYMPRLSKEQHFP, SHLTTLYLQHCRLEEDPMPILEK, LLQLKELELGHKSFSGKKMVCSSCGFPQ, MPLLLTLNIFDCRKLKQLPDEHLPS, LTAISLKKCGLEDPIPTLERL, VHLKELSLSELCGRIMVCTGGGFPQ, MPRLHTLEIRRCLKLKKLPNGFPQ, LEKLLHLKNVSLFQSFSGKRMVC, FPQLQKLSIREIEWEEWIVEQGSM, PLLHTLYIGVCPNLKELPDGLRFIY, and KKRLSEGGEDYYKVQHIPSVEFDD.

The protein belongs to the disease resistance NB-LRR family.

Functionally, disease resistance protein required for incompatible interactions with avirulent strains of Hyaloperonospora arabidopsidis (downy mildew), isolate Hpa-Hiks1 in cv. Columbia. This Arabidopsis thaliana (Mouse-ear cress) protein is Protein RECOGNITION OF PERONOSPORA PARASITICA 7.